We begin with the raw amino-acid sequence, 97 residues long: Serine protease inhibitor Kazal-type 13 (97 aa).

The N-terminal stretch at 1 to 26 is a signal peptide; it reads MKRSGCWHQRMLLSLVLLTWTHVTFS. Asn33 carries N-linked (GlcNAc...) asparagine glycosylation. The Kazal-like domain occupies 36–97; the sequence is RWPKPPCKMY…IQFVKYGKCE (62 aa). Intrachain disulfides connect Cys42–Cys78, Cys56–Cys75, and Cys64–Cys96.

The protein localises to the secreted. May be a serine protease inhibitor. Essential for sperm maturation and fertility. Inhibits sperm acrosome reaction, protecting sperm from premature reaction. The protein is Serine protease inhibitor Kazal-type 13 (Spink13) of Mus musculus (Mouse).